Here is a 270-residue protein sequence, read N- to C-terminus: Eukaryotic translation initiation factor 2 subunit beta (270 aa).

The tract at residues Met-1–Glu-38 is disordered.

Belongs to the eIF-2-beta/eIF-5 family. As to quaternary structure, eukaryotic translation initiation factor 2 eIF2 is a heterotrimeric complex composed of an alpha, a beta and a gamma subunit.

The protein resides in the cytoplasm. It is found in the cytosol. Component of the eIF2 complex that functions in the early steps of protein synthesis by forming a ternary complex with GTP and initiator tRNA. This complex binds to a 40S ribosomal subunit, followed by mRNA binding to form a 43S pre-initiation complex (43S PIC). Junction of the 60S ribosomal subunit to form the 80S initiation complex is preceded by hydrolysis of the GTP bound to eIF2 and release of an eIF2-GDP binary complex. In order for eIF2 to recycle and catalyze another round of initiation, the GDP bound to eIF2 must exchange with GTP by way of a reaction catalyzed by eIF2B. The sequence is that of Eukaryotic translation initiation factor 2 subunit beta from Triticum aestivum (Wheat).